Here is a 150-residue protein sequence, read N- to C-terminus: Putative STAG3-like protein 4 (150 aa).

Belongs to the SCC3 family.

The polypeptide is Putative STAG3-like protein 4 (STAG3L4) (Homo sapiens (Human)).